Here is a 162-residue protein sequence, read N- to C-terminus: RNA replication protein (162 aa).

It belongs to the potexvirus/carlavirus RNA replication protein family.

It catalyses the reaction RNA(n) + a ribonucleoside 5'-triphosphate = RNA(n+1) + diphosphate. The enzyme catalyses ATP + H2O = ADP + phosphate + H(+). Functionally, RNA replication. The central part of this protein possibly functions as an ATP-binding helicase. This Lilium formosanum protein is RNA replication protein.